The sequence spans 359 residues: Protein mab-21-like 2-B (359 aa).

It belongs to the mab-21 family.

The protein resides in the nucleus. The protein localises to the cytoplasm. Its function is as follows. Required for several aspects of embryonic development including normal development of the eye. The sequence is that of Protein mab-21-like 2-B (mab21l2-b) from Xenopus laevis (African clawed frog).